Here is a 130-residue protein sequence, read N- to C-terminus: Small ribosomal subunit protein uS8 (130 aa).

This sequence belongs to the universal ribosomal protein uS8 family. Part of the 30S ribosomal subunit. Contacts proteins S5 and S12.

Its function is as follows. One of the primary rRNA binding proteins, it binds directly to 16S rRNA central domain where it helps coordinate assembly of the platform of the 30S subunit. The polypeptide is Small ribosomal subunit protein uS8 (Aeromonas salmonicida (strain A449)).